Consider the following 370-residue polypeptide: Chorismate synthase (370 aa).

Arginine 48 is an NADP(+) binding site. FMN contacts are provided by residues 125–127 (RSS), 241–242 (NA), glycine 286, 301–305 (KPTSS), and arginine 327.

Belongs to the chorismate synthase family. As to quaternary structure, homotetramer. FMNH2 is required as a cofactor.

The enzyme catalyses 5-O-(1-carboxyvinyl)-3-phosphoshikimate = chorismate + phosphate. Its pathway is metabolic intermediate biosynthesis; chorismate biosynthesis; chorismate from D-erythrose 4-phosphate and phosphoenolpyruvate: step 7/7. Functionally, catalyzes the anti-1,4-elimination of the C-3 phosphate and the C-6 proR hydrogen from 5-enolpyruvylshikimate-3-phosphate (EPSP) to yield chorismate, which is the branch point compound that serves as the starting substrate for the three terminal pathways of aromatic amino acid biosynthesis. This reaction introduces a second double bond into the aromatic ring system. The sequence is that of Chorismate synthase from Ruegeria sp. (strain TM1040) (Silicibacter sp.).